The primary structure comprises 159 residues: Phosphopantetheine adenylyltransferase (159 aa).

Thr10 provides a ligand contact to substrate. Residues 10–11 (TF) and His18 contribute to the ATP site. Substrate contacts are provided by Lys42, Met74, and Arg88. ATP is bound by residues 89 to 91 (GLR), Glu99, and 124 to 130 (WSFISSS).

It belongs to the bacterial CoaD family. Homohexamer. The cofactor is Mg(2+).

Its subcellular location is the cytoplasm. The enzyme catalyses (R)-4'-phosphopantetheine + ATP + H(+) = 3'-dephospho-CoA + diphosphate. It functions in the pathway cofactor biosynthesis; coenzyme A biosynthesis; CoA from (R)-pantothenate: step 4/5. Reversibly transfers an adenylyl group from ATP to 4'-phosphopantetheine, yielding dephospho-CoA (dPCoA) and pyrophosphate. This is Phosphopantetheine adenylyltransferase from Salmonella dublin (strain CT_02021853).